The sequence spans 234 residues: Protein rgg8 (234 aa).

Its subcellular location is the cytoplasm. It is found in the nucleus. This chain is Protein rgg8 (rgg8), found in Schizosaccharomyces pombe (strain 972 / ATCC 24843) (Fission yeast).